The primary structure comprises 117 residues: uncharacterized protein (117 aa).

The signal sequence occupies residues 1–20 (MAAVHLYIISFTALMISSTS).

This is an uncharacterized protein from Saccharomyces cerevisiae (strain ATCC 204508 / S288c) (Baker's yeast).